We begin with the raw amino-acid sequence, 402 residues long: Multidrug resistance protein MdtH (402 aa).

The Cytoplasmic segment spans residues 1–12 (MSRVSQARNLGK). The helical transmembrane segment at 13-33 (YFLLIDNMLVVLGFFVVFPLI) threads the bilayer. Residues 34–98 (SIRFVDQMGW…GFATMGIAHE (65 aa)) lie on the Periplasmic side of the membrane. A helical transmembrane segment spans residues 99 to 116 (PWLLWFSCLLSGLGGTLF). At 117–138 (DPPRSALVVKLIRPQQRGRFFS) the chain is on the cytoplasmic side. Residues 139 to 159 (LLMMQDSASAVIGALLGSWLL) traverse the membrane as a helical segment. The Periplasmic portion of the chain corresponds to 160–164 (QYDFR). Residues 165–185 (LVCATGPVLFVLCAAFNAWLL) traverse the membrane as a helical segment. The Cytoplasmic portion of the chain corresponds to 186–213 (PAWKLSTVRTPVREGMTRVMRDKRFVTY). A helical membrane pass occupies residues 214-234 (VLTLAGYYMLAVQVMLMLPIM). Residues 235–243 (VNDVAGAPS) lie on the Periplasmic side of the membrane. The chain crosses the membrane as a helical span at residues 244–264 (AVKWMYAIEACLSLTLLYPIA). The Cytoplasmic portion of the chain corresponds to 265 to 276 (RWSEKHFRLEHR). Residues 277-297 (LMAGLLIMSLSMMPVGMVSGL) traverse the membrane as a helical segment. Residues 298–299 (QQ) are Periplasmic-facing. A helical transmembrane segment spans residues 300-320 (LFTLICLFYIGSIIAEPARET). Topologically, residues 321 to 339 (LSASLADARARGSYMGFSR) are cytoplasmic. A helical transmembrane segment spans residues 340-360 (LGLAIGGAIGYIGGGWLFDLG). Residues 361–367 (KSAHQPE) lie on the Periplasmic side of the membrane. A helical transmembrane segment spans residues 368 to 388 (LPWMMLGIIGIFTFLALGWQF). Topologically, residues 389-402 (SQKRAARRLLERDA) are cytoplasmic.

The protein belongs to the major facilitator superfamily. DHA1 family. MdtH (TC 2.A.1.2.21) subfamily.

Its subcellular location is the cell inner membrane. The chain is Multidrug resistance protein MdtH from Shigella flexneri serotype 5b (strain 8401).